The sequence spans 379 residues: Isocitrate dehydrogenase [NAD] subunit 2, mitochondrial (379 aa).

Residues 1 to 27 constitute a mitochondrion transit peptide; it reads MSMLSTLRTAGSLRTFSRSACYSFQRF. 4 residues coordinate substrate: Arg-129, Arg-139, Arg-160, and Asp-247. Mg(2+)-binding residues include Asp-247, Asp-273, and Asp-277.

Belongs to the isocitrate and isopropylmalate dehydrogenases family. Octamer of two non-identical subunits IDH1 and IDH2. Mg(2+) serves as cofactor. Requires Mn(2+) as cofactor.

It is found in the mitochondrion. It carries out the reaction D-threo-isocitrate + NAD(+) = 2-oxoglutarate + CO2 + NADH. Performs an essential role in the oxidative function of the citric acid cycle and is involved in glutamate biosynthesis. Also binds RNA; specifically to the 5'-untranslated leaders of mitochondrial mRNAs. The protein is Isocitrate dehydrogenase [NAD] subunit 2, mitochondrial (idh2) of Schizosaccharomyces pombe (strain 972 / ATCC 24843) (Fission yeast).